The sequence spans 491 residues: PE-PGRS family protein PE_PGRS26 (491 aa).

A PE domain is found at 1 to 93 (MSNVMVVPGM…VGSYAAAEAA (93 aa)). Composition is skewed to gly residues over residues 207–221 (NGGT…GGGL) and 229–238 (GGNGGGGDAG). 3 disordered regions span residues 207–238 (NGGT…GDAG), 255–275 (DGGA…ARGG), and 444–491 (AGGN…GKHG). Gly residues predominate over residues 444 to 485 (AGGNGGDGGPSQGGGNPGFGGDGGTGGPGGVGVPDGIGGANG).

The protein belongs to the mycobacterial PE family. PGRS subfamily.

It is found in the cell surface. The chain is PE-PGRS family protein PE_PGRS26 from Mycobacterium tuberculosis (strain ATCC 25618 / H37Rv).